We begin with the raw amino-acid sequence, 207 residues long: Thiamine-phosphate synthase (207 aa).

4-amino-2-methyl-5-(diphosphooxymethyl)pyrimidine-binding positions include 36-40 and D68; that span reads QLRIK. 2 residues coordinate Mg(2+): D69 and D88. Position 106 (S106) interacts with 4-amino-2-methyl-5-(diphosphooxymethyl)pyrimidine. 132 to 134 serves as a coordination point for 2-[(2R,5Z)-2-carboxy-4-methylthiazol-5(2H)-ylidene]ethyl phosphate; it reads TKT. K135 contacts 4-amino-2-methyl-5-(diphosphooxymethyl)pyrimidine. Residues G162 and 182–183 contribute to the 2-[(2R,5Z)-2-carboxy-4-methylthiazol-5(2H)-ylidene]ethyl phosphate site; that span reads VS.

It belongs to the thiamine-phosphate synthase family. Mg(2+) is required as a cofactor.

It catalyses the reaction 2-[(2R,5Z)-2-carboxy-4-methylthiazol-5(2H)-ylidene]ethyl phosphate + 4-amino-2-methyl-5-(diphosphooxymethyl)pyrimidine + 2 H(+) = thiamine phosphate + CO2 + diphosphate. It carries out the reaction 2-(2-carboxy-4-methylthiazol-5-yl)ethyl phosphate + 4-amino-2-methyl-5-(diphosphooxymethyl)pyrimidine + 2 H(+) = thiamine phosphate + CO2 + diphosphate. The catalysed reaction is 4-methyl-5-(2-phosphooxyethyl)-thiazole + 4-amino-2-methyl-5-(diphosphooxymethyl)pyrimidine + H(+) = thiamine phosphate + diphosphate. It participates in cofactor biosynthesis; thiamine diphosphate biosynthesis; thiamine phosphate from 4-amino-2-methyl-5-diphosphomethylpyrimidine and 4-methyl-5-(2-phosphoethyl)-thiazole: step 1/1. Its function is as follows. Condenses 4-methyl-5-(beta-hydroxyethyl)thiazole monophosphate (THZ-P) and 2-methyl-4-amino-5-hydroxymethyl pyrimidine pyrophosphate (HMP-PP) to form thiamine monophosphate (TMP). In Pyrococcus abyssi (strain GE5 / Orsay), this protein is Thiamine-phosphate synthase.